The following is a 508-amino-acid chain: D-alanine--D-alanyl carrier protein ligase (508 aa).

Residue 152-153 (TS) coordinates ATP. Aspartate 198 is a D-alanine binding site. 293-298 (NTYGPT) is an ATP binding site. Residue valine 302 coordinates D-alanine. Residues aspartate 384, 396-399 (YRGR), and lysine 495 each bind ATP. Position 495 (lysine 495) interacts with D-alanine.

It belongs to the ATP-dependent AMP-binding enzyme family. DltA subfamily.

The protein localises to the cytoplasm. It catalyses the reaction holo-[D-alanyl-carrier protein] + D-alanine + ATP = D-alanyl-[D-alanyl-carrier protein] + AMP + diphosphate. Its pathway is cell wall biogenesis; lipoteichoic acid biosynthesis. Its function is as follows. Catalyzes the first step in the D-alanylation of lipoteichoic acid (LTA), the activation of D-alanine and its transfer onto the D-alanyl carrier protein (Dcp) DltC. In an ATP-dependent two-step reaction, forms a high energy D-alanyl-AMP intermediate, followed by transfer of the D-alanyl residue as a thiol ester to the phosphopantheinyl prosthetic group of the Dcp. D-alanylation of LTA plays an important role in modulating the properties of the cell wall in Gram-positive bacteria, influencing the net charge of the cell wall. This chain is D-alanine--D-alanyl carrier protein ligase, found in Lactiplantibacillus plantarum (strain ATCC BAA-793 / NCIMB 8826 / WCFS1) (Lactobacillus plantarum).